The following is a 425-amino-acid chain: Serine--tRNA ligase (425 aa).

228–230 is an L-serine binding site; sequence TAE. 259 to 261 contacts ATP; that stretch reads RSE. Glu-282 lines the L-serine pocket. Residue 346 to 349 participates in ATP binding; sequence EIAS. Residue Ser-382 participates in L-serine binding.

This sequence belongs to the class-II aminoacyl-tRNA synthetase family. Type-1 seryl-tRNA synthetase subfamily. Homodimer. The tRNA molecule binds across the dimer.

It localises to the cytoplasm. The enzyme catalyses tRNA(Ser) + L-serine + ATP = L-seryl-tRNA(Ser) + AMP + diphosphate + H(+). It carries out the reaction tRNA(Sec) + L-serine + ATP = L-seryl-tRNA(Sec) + AMP + diphosphate + H(+). The protein operates within aminoacyl-tRNA biosynthesis; selenocysteinyl-tRNA(Sec) biosynthesis; L-seryl-tRNA(Sec) from L-serine and tRNA(Sec): step 1/1. In terms of biological role, catalyzes the attachment of serine to tRNA(Ser). Is also able to aminoacylate tRNA(Sec) with serine, to form the misacylated tRNA L-seryl-tRNA(Sec), which will be further converted into selenocysteinyl-tRNA(Sec). The sequence is that of Serine--tRNA ligase from Rickettsia massiliae (strain Mtu5).